We begin with the raw amino-acid sequence, 78 residues long: Acyl carrier protein (78 aa).

Residues 2-77 (SDIEQRVKQA…SAIDYVTKKL (76 aa)) enclose the Carrier domain. Ser-37 is modified (O-(pantetheine 4'-phosphoryl)serine).

The protein belongs to the acyl carrier protein (ACP) family. Post-translationally, 4'-phosphopantetheine is transferred from CoA to a specific serine of apo-ACP by AcpS. This modification is essential for activity because fatty acids are bound in thioester linkage to the sulfhydryl of the prosthetic group.

The protein localises to the cytoplasm. Its pathway is lipid metabolism; fatty acid biosynthesis. Carrier of the growing fatty acid chain in fatty acid biosynthesis. The polypeptide is Acyl carrier protein (Acinetobacter baumannii (strain AB307-0294)).